The following is a 101-amino-acid chain: Class II hydrophobin 5 (101 aa).

Positions 1–15 (MQLTALLALATLAIA) are cleaved as a signal peptide. 4 disulfide bridges follow: C33–C83, C44–C74, C45–C57, and C84–C95.

It belongs to the cerato-ulmin hydrophobin family. As to quaternary structure, homodimer. Homodimers further self-assemble to form highly ordered films at water-air interfaces through intermolecular interactions.

The protein localises to the secreted. It is found in the cell wall. Functionally, aerial growth, conidiation, and dispersal of filamentous fungi in the environment rely upon a capability of their secreting small amphipathic proteins called hydrophobins (HPBs) with low sequence identity. Class I can self-assemble into an outermost layer of rodlet bundles on aerial cell surfaces, conferring cellular hydrophobicity that supports fungal growth, development and dispersal; whereas Class II form highly ordered films at water-air interfaces through intermolecular interactions but contribute nothing to the rodlet structure. The polypeptide is Class II hydrophobin 5 (Trichoderma asperellum (strain ATCC 204424 / CBS 433.97 / NBRC 101777)).